Consider the following 466-residue polypeptide: Glutamate--tRNA ligase (466 aa).

Positions 11–21 (PSPTGFIHLGN) match the 'HIGH' region motif. The 'KMSKS' region signature appears at 243–247 (KMSKR). Position 246 (Lys246) interacts with ATP.

This sequence belongs to the class-I aminoacyl-tRNA synthetase family. Glutamate--tRNA ligase type 1 subfamily. Monomer.

The protein resides in the cytoplasm. It carries out the reaction tRNA(Glu) + L-glutamate + ATP = L-glutamyl-tRNA(Glu) + AMP + diphosphate. In terms of biological role, catalyzes the attachment of glutamate to tRNA(Glu) in a two-step reaction: glutamate is first activated by ATP to form Glu-AMP and then transferred to the acceptor end of tRNA(Glu). The protein is Glutamate--tRNA ligase of Cupriavidus necator (strain ATCC 17699 / DSM 428 / KCTC 22496 / NCIMB 10442 / H16 / Stanier 337) (Ralstonia eutropha).